We begin with the raw amino-acid sequence, 276 residues long: Small ribosomal subunit protein uS2 (276 aa).

Residues 255-276 form a disordered region; sequence ASATATAAPTEAGAPEPTTDPS.

Belongs to the universal ribosomal protein uS2 family.

The protein is Small ribosomal subunit protein uS2 of Mycolicibacterium paratuberculosis (strain ATCC BAA-968 / K-10) (Mycobacterium paratuberculosis).